The primary structure comprises 289 residues: Putative transmembrane protein ORF289 (289 aa).

Over 1 to 152 the chain is Extracellular; sequence MAIAKEFLLT…QYTSVVTFRT (152 aa). The helical transmembrane segment at 153 to 173 threads the bilayer; that stretch reads LVAPILYFFALFLVPAWSTVL. Topologically, residues 174–234 are cytoplasmic; the sequence is KQNPTFPQSQ…NGEVTSTQVN (61 aa). Residues 235–255 form a helical membrane-spanning segment; that stretch reads APIFIGVTTPSGVLVLAYNYY. At 256-289 the chain is on the extracellular side; it reads SGTISKYVSLTVTTTYGSATVINQFETKTTGGTT.

It is found in the host membrane. The protein is Putative transmembrane protein ORF289 of Acidianus sp. F28 (AFV-2).